Reading from the N-terminus, the 645-residue chain is UvrABC system protein B (645 aa).

A Helicase ATP-binding domain is found at 24–414 (AGLNDNKRDQ…LFVEQVIRPT (391 aa)). 37 to 44 (GVTGSGKT) contacts ATP. The Beta-hairpin motif lies at 90–113 (YYDYYQPEAYLPQTDTYIEKDSVI). In terms of domain architecture, Helicase C-terminal spans 426 to 591 (AEAQVYDVVH…VLPKTIIKPI (166 aa)). Positions 610–645 (KDTVSSLRKQMLAHAKNLEFEEAAKIKNIIGRINNL) constitute a UVR domain.

The protein belongs to the UvrB family. Forms a heterotetramer with UvrA during the search for lesions. Interacts with UvrC in an incision complex.

Its subcellular location is the cytoplasm. In terms of biological role, the UvrABC repair system catalyzes the recognition and processing of DNA lesions. A damage recognition complex composed of 2 UvrA and 2 UvrB subunits scans DNA for abnormalities. Upon binding of the UvrA(2)B(2) complex to a putative damaged site, the DNA wraps around one UvrB monomer. DNA wrap is dependent on ATP binding by UvrB and probably causes local melting of the DNA helix, facilitating insertion of UvrB beta-hairpin between the DNA strands. Then UvrB probes one DNA strand for the presence of a lesion. If a lesion is found the UvrA subunits dissociate and the UvrB-DNA preincision complex is formed. This complex is subsequently bound by UvrC and the second UvrB is released. If no lesion is found, the DNA wraps around the other UvrB subunit that will check the other stand for damage. The protein is UvrABC system protein B of Wolbachia sp. subsp. Brugia malayi (strain TRS).